Here is a 452-residue protein sequence, read N- to C-terminus: Pup--protein ligase (452 aa).

Glutamate 9 provides a ligand contact to Mg(2+). An ATP-binding site is contributed by arginine 53. Tyrosine 55 lines the Mg(2+) pocket. Aspartate 57 functions as the Proton acceptor in the catalytic mechanism. A Mg(2+)-binding site is contributed by glutamate 63. Positions 66 and 419 each coordinate ATP.

It belongs to the Pup ligase/Pup deamidase family. Pup-conjugating enzyme subfamily.

It carries out the reaction ATP + [prokaryotic ubiquitin-like protein]-L-glutamate + [protein]-L-lysine = ADP + phosphate + N(6)-([prokaryotic ubiquitin-like protein]-gamma-L-glutamyl)-[protein]-L-lysine.. Its pathway is protein degradation; proteasomal Pup-dependent pathway. It participates in protein modification; protein pupylation. Functionally, catalyzes the covalent attachment of the prokaryotic ubiquitin-like protein modifier Pup to the proteasomal substrate proteins, thereby targeting them for proteasomal degradation. This tagging system is termed pupylation. The ligation reaction involves the side-chain carboxylate of the C-terminal glutamate of Pup and the side-chain amino group of a substrate lysine. The sequence is that of Pup--protein ligase from Actinosynnema mirum (strain ATCC 29888 / DSM 43827 / JCM 3225 / NBRC 14064 / NCIMB 13271 / NRRL B-12336 / IMRU 3971 / 101).